The sequence spans 81 residues: ATP synthase subunit c, chloroplastic (81 aa).

The next 2 helical transmembrane spans lie at 3-23 and 57-77; these read PLIA…ASIG and LAFM…LLFA.

It belongs to the ATPase C chain family. F-type ATPases have 2 components, F(1) - the catalytic core - and F(0) - the membrane proton channel. F(1) has five subunits: alpha(3), beta(3), gamma(1), delta(1), epsilon(1). F(0) has four main subunits: a(1), b(1), b'(1) and c(10-14). The alpha and beta chains form an alternating ring which encloses part of the gamma chain. F(1) is attached to F(0) by a central stalk formed by the gamma and epsilon chains, while a peripheral stalk is formed by the delta, b and b' chains.

The protein localises to the plastid. The protein resides in the chloroplast thylakoid membrane. Its function is as follows. F(1)F(0) ATP synthase produces ATP from ADP in the presence of a proton or sodium gradient. F-type ATPases consist of two structural domains, F(1) containing the extramembraneous catalytic core and F(0) containing the membrane proton channel, linked together by a central stalk and a peripheral stalk. During catalysis, ATP synthesis in the catalytic domain of F(1) is coupled via a rotary mechanism of the central stalk subunits to proton translocation. Key component of the F(0) channel; it plays a direct role in translocation across the membrane. A homomeric c-ring of between 10-14 subunits forms the central stalk rotor element with the F(1) delta and epsilon subunits. This Agrostis stolonifera (Creeping bentgrass) protein is ATP synthase subunit c, chloroplastic.